Consider the following 695-residue polypeptide: Lysophospholipase 2 (695 aa).

Positions 1–19 are cleaved as a signal peptide; sequence MQLSVLIASVLAAGAAVDA. N-linked (GlcNAc...) asparagine glycans are attached at residues Asn-26, Asn-72, Asn-83, Asn-115, Asn-152, Asn-171, Asn-207, Asn-269, Asn-335, Asn-379, Asn-480, Asn-504, Asn-513, Asn-532, Asn-556, Asn-573, Asn-620, Asn-626, Asn-644, and Asn-648. The PLA2c domain occupies 28-577; that stretch reads SCPDNANFIR…TNYCWNGTID (550 aa). Positions 612-662 are disordered; sequence NTGSGTKSNSSSKTNSTLVTSSRATSTGTLISNSSSNSTVSSTAARSSTSS.

Belongs to the lysophospholipase family.

Its subcellular location is the secreted. It is found in the cell wall. It catalyses the reaction a 1-acyl-sn-glycero-3-phosphocholine + H2O = sn-glycerol 3-phosphocholine + a fatty acid + H(+). Functionally, catalyzes the release of fatty acids from lysophospholipids. Phospholipase B may well contribute to pathogenicity by abetting the fungus in damaging and traversing host cell membranes, processes which likely increase the rapidity of disseminated infection. The protein is Lysophospholipase 2 of Candida glabrata (strain ATCC 2001 / BCRC 20586 / JCM 3761 / NBRC 0622 / NRRL Y-65 / CBS 138) (Yeast).